The chain runs to 202 residues: Imidazoleglycerol-phosphate dehydratase (202 aa).

The protein belongs to the imidazoleglycerol-phosphate dehydratase family.

The protein resides in the cytoplasm. It catalyses the reaction D-erythro-1-(imidazol-4-yl)glycerol 3-phosphate = 3-(imidazol-4-yl)-2-oxopropyl phosphate + H2O. The protein operates within amino-acid biosynthesis; L-histidine biosynthesis; L-histidine from 5-phospho-alpha-D-ribose 1-diphosphate: step 6/9. In Mycolicibacterium gilvum (strain PYR-GCK) (Mycobacterium gilvum (strain PYR-GCK)), this protein is Imidazoleglycerol-phosphate dehydratase.